A 155-amino-acid chain; its full sequence is Ribosome-binding factor A (155 aa).

The protein belongs to the RbfA family. As to quaternary structure, monomer. Binds 30S ribosomal subunits, but not 50S ribosomal subunits or 70S ribosomes.

Its subcellular location is the cytoplasm. Its function is as follows. One of several proteins that assist in the late maturation steps of the functional core of the 30S ribosomal subunit. Associates with free 30S ribosomal subunits (but not with 30S subunits that are part of 70S ribosomes or polysomes). Required for efficient processing of 16S rRNA. May interact with the 5'-terminal helix region of 16S rRNA. The sequence is that of Ribosome-binding factor A from Methylocella silvestris (strain DSM 15510 / CIP 108128 / LMG 27833 / NCIMB 13906 / BL2).